We begin with the raw amino-acid sequence, 62 residues long: MANAKDLKVTLVRSLNGRLKAHIACVRGLGVRRIHSPVVVKDTPENRGMINKVSYMLKVEEA.

It belongs to the universal ribosomal protein uL30 family. As to quaternary structure, part of the 50S ribosomal subunit.

This is Large ribosomal subunit protein uL30 from Thioalkalivibrio sulfidiphilus (strain HL-EbGR7).